Here is a 329-residue protein sequence, read N- to C-terminus: L-threonine dehydratase catabolic TdcB (329 aa).

Position 53–54 (Arg-53–Thr-54) interacts with AMP. Lys-58 is modified (N6-(pyridoxal phosphate)lysine). AMP is bound by residues Gln-88, Asp-119 to Tyr-120, and Asn-314.

Belongs to the serine/threonine dehydratase family. In terms of assembly, in the native structure, TdcB is in a dimeric form, whereas in the TdcB-AMP complex, it exists in a tetrameric form (dimer of dimers). The cofactor is pyridoxal 5'-phosphate.

It catalyses the reaction L-threonine = 2-oxobutanoate + NH4(+). The enzyme catalyses L-serine = pyruvate + NH4(+). It functions in the pathway amino-acid degradation; L-threonine degradation via propanoate pathway; propanoate from L-threonine: step 1/4. Its activity is regulated as follows. Each protein molecule can bind up to four molecules of AMP, which act as an allosteric activator to the enzyme. Functionally, catalyzes the anaerobic formation of alpha-ketobutyrate and ammonia from threonine in a two-step reaction. The first step involved a dehydration of threonine and a production of enamine intermediates (aminocrotonate), which tautomerizes to its imine form (iminobutyrate). Both intermediates are unstable and short-lived. The second step is the nonenzymatic hydrolysis of the enamine/imine intermediates to form 2-ketobutyrate and free ammonia. In the low water environment of the cell, the second step is accelerated by RidA. TdcB also dehydrates serine to yield pyruvate via analogous enamine/imine intermediates. The sequence is that of L-threonine dehydratase catabolic TdcB (tdcB) from Escherichia coli O157:H7.